The primary structure comprises 563 residues: Autotransporter BimA (563 aa).

The interval 1–20 (MKYRRLSLAHARQDSGQAAS) is disordered. Residues 1–48 (MKYRRLSLAHARQDSGQAASNARSRRFARLLCSSIAPLALGFSADAFA) form the signal peptide. Residues 61–472 (APNDAHGNLL…NLAISNSNAY (412 aa)) are surface exposed passenger domain. In terms of domain architecture, WH2 spans 65–82 (AHGNLLDEIRRGVPLRHV). The central and acidic domains stretch occupies residues 96–130 (TLADAMRRVIDSRRTAFDSPPATPASPSPSWSDDE). Positions 109 to 350 (RTAFDSPPAT…PARPGGGQFT (242 aa)) are disordered. 3 stretches are compositionally biased toward low complexity: residues 138–150 (ATRP…SAAR), 162–197 (PASA…STPR), and 211–227 (SPAA…AHSR). Composition is skewed to polar residues over residues 228–238 (GSTQPPSNLST) and 269–281 (SRGS…NLST). Residues 473 to 509 (TNQRIGDLQQSITETARDAYSGVAAATALTMIPDVDR) are outer membrane translocation of the passenger domain. The next 4 beta stranded transmembrane spans lie at 510 to 519 (DKMLSIGVGG), 525 to 536 (HRAVALGGTARI), 543 to 549 (RAGVAMS), and 553 to 563 (NTVGVGMSWQW). The segment at 510-563 (DKMLSIGVGGAVYKGHRAVALGGTARIGENLKVRAGVAMSAGGNTVGVGMSWQW) is translocator domain.

The protein belongs to the autotransporter-2 (AT-2) (TC 1.B.40) family. In terms of assembly, homotrimer. Interacts with host G-actin; the interaction is direct. Interacts (via central and acidic domains) with host ACTR2/ARP2 and ACTR3/ARP3.

It is found in the cell outer membrane. Its subcellular location is the cell surface. Functionally, during host cell infection, required for actin-based intracellular motility. Mediates actin tail formation at one pole of the bacteria surface by recruiting host Arp2/3 (ACTR3/ARP3-ACTR2/ARP2) which leads to actin polymerization which provides the propulsive force for intracellular movement and intercellular dissemination of the bacterium. In Burkholderia thailandensis (strain ATCC 700388 / DSM 13276 / CCUG 48851 / CIP 106301 / E264), this protein is Autotransporter BimA.